Consider the following 252-residue polypeptide: Probable oligoribonuclease (252 aa).

The Exonuclease domain maps to 81 to 241 (VWIDCEMTGL…ALSDILESIG (161 aa)). Residue Y202 is part of the active site.

Belongs to the oligoribonuclease family.

The protein resides in the cytoplasm. Its subcellular location is the nucleus. Its function is as follows. 3'-to-5' exoribonuclease specific for small oligoribonucleotides. This chain is Probable oligoribonuclease (rex2), found in Schizosaccharomyces pombe (strain 972 / ATCC 24843) (Fission yeast).